The sequence spans 355 residues: Neurogenic differentiation factor 1 (355 aa).

The segment at 1-93 is disordered; the sequence is MTKSYSESGL…GPKKKKMTKA (93 aa). A compositionally biased stretch (acidic residues) spans 58–77; sequence DEEDEDEDLEEEDEEEEEDD. Basic residues predominate over residues 80 to 92; the sequence is PKRRGPKKKKMTK. A Nuclear localization signal motif is present at residues 86–92; sequence KKKKMTK. One can recognise a bHLH domain in the interval 100-152; sequence LRRMKANARERNRMHGLNAALDNLRKVVPCYSKTQKLSKIETLRLAKNYIWAL. Phosphoserine is present on residues S161, S258, S265, and S273. S334 bears the Phosphoserine; by CaMK2 mark.

As to quaternary structure, efficient DNA-binding requires dimerization with another bHLH protein. Heterodimer with TCF3/E47; the heterodimer is inhibited in presence of ID2, but not NR0B2, to E-box element. Interacts with EP300; the interaction is inhibited by NR0B2. Interacts with RREB1. Interacts with ATOH8. Phosphorylated. In islet cells, phosphorylated on Ser-273 upon glucose stimulation; which may be required for nuclear localization. In activated neurons, phosphorylated on Ser-334; which promotes dendritic growth. Phosphorylated by MAPK1; phosphorylation regulates heterodimerization and DNA-binding activities. Phosphorylation on Ser-265 and Ser-273 increases transactivation on the insulin promoter in glucose-stimulated insulinoma cells. As to expression, most abundant in pancreatic alpha- and beta-cells, less in brain and intestine.

It localises to the cytoplasm. The protein localises to the nucleus. Functionally, acts as a transcriptional activator: mediates transcriptional activation by binding to E box-containing promoter consensus core sequences 5'-CANNTG-3'. Associates with the p300/CBP transcription coactivator complex to stimulate transcription of the secretin gene as well as the gene encoding the cyclin-dependent kinase inhibitor CDKN1A. Contributes to the regulation of several cell differentiation pathways, like those that promote the formation of early retinal ganglion cells, inner ear sensory neurons, granule cells forming either the cerebellum or the dentate gyrus cell layer of the hippocampus, endocrine islet cells of the pancreas and enteroendocrine cells of the small intestine. Together with PAX6 or SIX3, is required for the regulation of amacrine cell fate specification. Also required for dendrite morphogenesis and maintenance in the cerebellar cortex. Associates with chromatin to enhancer regulatory elements in genes encoding key transcriptional regulators of neurogenesis. This is Neurogenic differentiation factor 1 (NEUROD1) from Mesocricetus auratus (Golden hamster).